A 490-amino-acid polypeptide reads, in one-letter code: Limb region 1 protein homolog (490 aa).

Over 1–19 (MEGQDEVSAREQHFHSQVR) the chain is Extracellular. A helical membrane pass occupies residues 20–40 (ESTICFLLFAILYVVSYFIIT). At 41 to 62 (RYKRKSDEQEDEDAIVNRISLF) the chain is on the cytoplasmic side. A helical transmembrane segment spans residues 63–83 (LSTFTLAVSAGAVLLLPFSII). Topologically, residues 84-110 (SNEILLSFPQNYYIQWLNGSLIHGLWN) are extracellular. A helical transmembrane segment spans residues 111–131 (LASLFSNLCLFVLMPFAFFFL). The Cytoplasmic portion of the chain corresponds to 132–151 (ESEGFAGLKKGIRARILETL). The chain crosses the membrane as a helical span at residues 152–172 (VMLLLLALLILGIVWVASALI). Residues 173–187 (DNDAASMESLYDLWE) are Extracellular-facing. A helical membrane pass occupies residues 188–208 (FYLPYLYSCISLMGCLLLLLC). Over 209-291 (TPVGLSRMFT…RKKASAWERN (83 aa)) the chain is Cytoplasmic. Residues 250 to 287 (RLNGLSSSVEYNIMELEQELENVKTLKTKLERRKKASA) are a coiled coil. Residues 292-312 (LVYPAVMVLLLIETSISVLLV) form a helical membrane-spanning segment. The Extracellular portion of the chain corresponds to 313–339 (ACNILCLLVDETAMPKGTRGPGIGNAS). Residues 340 to 360 (LSTFGFVGAALEIILIFYLMV) traverse the membrane as a helical segment. The Cytoplasmic segment spans residues 361–383 (SSVVGFYSLRFFGNFTPKKDDTT). Residues 384 to 404 (MTKIIGNCVSILVLSSALPVM) traverse the membrane as a helical segment. Over 405 to 426 (SRTLGITRFDLLGDFGRFNWLG) the chain is Extracellular. The helical transmembrane segment at 427–447 (NFYIVLSYNLLFAIVTTLCLV) threads the bilayer. The Cytoplasmic segment spans residues 448–490 (RKFTSAVREELFKALGLHKLHLPNTSRDSETAKPSVNGHQKAL).

This sequence belongs to the LIMR family. As to expression, widely expressed with strongest expression in heart and pancreas.

Its subcellular location is the membrane. Functionally, putative membrane receptor. The polypeptide is Limb region 1 protein homolog (LMBR1) (Homo sapiens (Human)).